A 549-amino-acid polypeptide reads, in one-letter code: MKKTNPVKTRAWLFLEKHYEDIKNRHMRDFFKEDPRRFDNFSLALDDILVDFSKNRITTKTLELLLNLAHEAGLKEMINSMFSGEHINETENRAVLHTALRRQGDEPVLADGKDVMPDVRAVLEQMRVFSGRIITGEWKGFTGKAITDVVNIGIGGSDLGPVMVTECLKPYAKPHMNVHFVSNVDGTHIAETLKLLNPETTLFMIASKTFTTQETMTNAYTARAWFLEKAGDKKHVARHFVALSTNKEAVEEFGIDSQNMFEFWDWVGGRYSLWSAIGLSIACYVGFENFHELLKGAYAMDVHFQKEPFERNIPVILALIGIWYNNFFNAQTEAILPYDQYMHRFPAYFQQGNMESNGKSVDRDGNPVTWQTGPIIWGEPGTNGQHAFYQLIHQGTKMIPADFLAPAQSHNPIGEHHKILLSNFFAQTEALMNGKTAAEVQKELEAAGKLPEEIAEILPHKVFDGNRPTNSILFKKLTPRTLGSLIAMYEHKIFVQGALWNIYSFDQWGVELGKQLAKKILPELEDERPVNSHDASTNGLINAFKHMMG.

Glu355 functions as the Proton donor in the catalytic mechanism. Residues His386 and Lys514 contribute to the active site.

Belongs to the GPI family.

It localises to the cytoplasm. It carries out the reaction alpha-D-glucose 6-phosphate = beta-D-fructose 6-phosphate. It functions in the pathway carbohydrate biosynthesis; gluconeogenesis. The protein operates within carbohydrate degradation; glycolysis; D-glyceraldehyde 3-phosphate and glycerone phosphate from D-glucose: step 2/4. In terms of biological role, catalyzes the reversible isomerization of glucose-6-phosphate to fructose-6-phosphate. This Desulfatibacillum aliphaticivorans protein is Glucose-6-phosphate isomerase.